A 381-amino-acid chain; its full sequence is Stearoyl-[acyl-carrier-protein] 9-desaturase 1, chloroplastic (381 aa).

A chloroplast-targeting transit peptide spans 1–26; sequence MQVVGTVRVSGCGAVVAPSRRQCRVS. Glu120, Glu158, His161, Glu211, Glu244, and His247 together coordinate Fe cation.

The protein belongs to the fatty acid desaturase type 2 family. Homodimer. It depends on Fe(2+) as a cofactor.

It is found in the plastid. Its subcellular location is the chloroplast. The catalysed reaction is octadecanoyl-[ACP] + 2 reduced [2Fe-2S]-[ferredoxin] + O2 + 2 H(+) = (9Z)-octadecenoyl-[ACP] + 2 oxidized [2Fe-2S]-[ferredoxin] + 2 H2O. Its pathway is lipid metabolism; fatty acid metabolism. In terms of biological role, converts stearoyl-ACP to oleoyl-ACP by introduction of a cis double bond between carbons 9 and 10 of the acyl chain. The protein is Stearoyl-[acyl-carrier-protein] 9-desaturase 1, chloroplastic of Oryza sativa subsp. indica (Rice).